Here is a 420-residue protein sequence, read N- to C-terminus: Phosphoribosylamine--glycine ligase (420 aa).

The 207-residue stretch at 108–314 (KQFMEKYAIP…FAALIDALLH (207 aa)) folds into the ATP-grasp domain. Position 134-195 (134-195 (LDERGVPIVI…EDFLAGEEFS (62 aa))) interacts with ATP. Glu284 and Asn286 together coordinate Mg(2+).

It belongs to the GARS family. It depends on Mg(2+) as a cofactor. The cofactor is Mn(2+).

It carries out the reaction 5-phospho-beta-D-ribosylamine + glycine + ATP = N(1)-(5-phospho-beta-D-ribosyl)glycinamide + ADP + phosphate + H(+). The protein operates within purine metabolism; IMP biosynthesis via de novo pathway; N(1)-(5-phospho-D-ribosyl)glycinamide from 5-phospho-alpha-D-ribose 1-diphosphate: step 2/2. The sequence is that of Phosphoribosylamine--glycine ligase from Listeria monocytogenes serotype 4b (strain F2365).